A 523-amino-acid chain; its full sequence is MHCSLNGDWSMQLNSTEISDLIKQRIESFNVVSEARNEGTIVSVSDGIIRIHGLADVMQGEMIELPGGRYALALNLERDSVGAVVMGPYADLKEGMKVTGTGRILEVPVGPELLGRVVNTLGEPIDGKGPIEAKLTSPVEVIAPGVIDRQSVDQPVQTGYKSVDSMIPIGRGQRELIIGDRQTGKTAMAIDAIINQKNSGIFSIYVAIGQKASTIANVVRKLEEHGALKNTIVVVASASESAALQYLAPYAGCAMGEYFRDRGEDALIVYDDLSKQAVAYRQISLLLKRPPGREAFPGDVFYLHSRLLERAARVNAEYVERFTNGEVKGKTGSLTALPIIETQAGDVSAFVPTNVISITDGQIFLQTELFNAGVRPAVDPGISVSRVGGSAQTKIIKKLSGGIRTALAAYRELAAFAQFSSDLDEATKRQLNHGQKVTELMKQKQYAPMSVFDQALTIFAAERGYLSDIELSKVLDFEAALLSYARGQYAELAAEIDKTGAYNDEIEAQLKKLTDDFKATQTW.

179–186 contacts ATP; it reads GDRQTGKT.

It belongs to the ATPase alpha/beta chains family. F-type ATPases have 2 components, CF(1) - the catalytic core - and CF(0) - the membrane proton channel. CF(1) has five subunits: alpha(3), beta(3), gamma(1), delta(1), epsilon(1). CF(0) has three main subunits: a(1), b(2) and c(9-12). The alpha and beta chains form an alternating ring which encloses part of the gamma chain. CF(1) is attached to CF(0) by a central stalk formed by the gamma and epsilon chains, while a peripheral stalk is formed by the delta and b chains.

Its subcellular location is the cell inner membrane. The enzyme catalyses ATP + H2O + 4 H(+)(in) = ADP + phosphate + 5 H(+)(out). Functionally, produces ATP from ADP in the presence of a proton gradient across the membrane. The alpha chain is a regulatory subunit. The chain is ATP synthase subunit alpha from Vibrio vulnificus (strain YJ016).